Here is a 359-residue protein sequence, read N- to C-terminus: Acyl-CoA Delta-9 desaturase (359 aa).

The next 2 membrane-spanning stretches (helical) occupy residues 51 to 71 (VILF…AFTS) and 74 to 94 (IATT…ITGG). His96, His101, His133, His136, and His137 together coordinate Fe cation. The Histidine box-1 motif lies at 96-101 (HRLWAH). Residues 133–137 (HRVHH) carry the Histidine box-2 motif. The next 2 membrane-spanning stretches (helical) occupy residues 194–214 (YLIL…VYMW) and 222–244 (WFVA…NSAA). His245, His274, His277, and His278 together coordinate Fe cation. Residues 274–278 (HNYHH) carry the Histidine box-3 motif.

This sequence belongs to the fatty acid desaturase type 1 family. Requires Fe(2+) as cofactor.

The protein resides in the membrane. It catalyses the reaction octadecanoyl-CoA + 2 Fe(II)-[cytochrome b5] + O2 + 2 H(+) = (9Z)-octadecenoyl-CoA + 2 Fe(III)-[cytochrome b5] + 2 H2O. The enzyme catalyses hexadecanoyl-CoA + 2 Fe(II)-[cytochrome b5] + O2 + 2 H(+) = (9Z)-hexadecenoyl-CoA + 2 Fe(III)-[cytochrome b5] + 2 H2O. In terms of biological role, catalyzes the formation of a Delta9 double bond, acting on saturated fatty acyl substrates like palmitoyl-CoA (hexadecanoyl-CoA) and stearoyl-CoA (octadecanoyl-CoA) with higher desaturation activity on octadecanoyl-CoA than hexadecanoyl-CoA. The protein is Acyl-CoA Delta-9 desaturase of Acheta domesticus (House cricket).